The following is a 115-amino-acid chain: MKMLLFLNEACIFIDSVCEGIVFWGLCLFVCAECGNAYYRGARVPYKTLFRAFEVSVFGQKEYPNFRFGPSYRFLCLSPYSICCKQPPMEEVILYYPSPDSLIKNRKRVLGVAYL.

Residues 10–30 (ACIFIDSVCEGIVFWGLCLFV) traverse the membrane as a helical segment.

The protein belongs to the UPF0377 family.

The protein localises to the membrane. This Saccharomyces cerevisiae (strain ATCC 204508 / S288c) (Baker's yeast) protein is Putative UPF0377 protein YHL045W.